Reading from the N-terminus, the 491-residue chain is Glutamyl-tRNA(Gln) amidotransferase subunit A (491 aa).

Residues Lys-78 and Ser-158 each act as charge relay system in the active site. Residue Ser-182 is the Acyl-ester intermediate of the active site.

The protein belongs to the amidase family. GatA subfamily. In terms of assembly, heterotrimer of A, B and C subunits.

The catalysed reaction is L-glutamyl-tRNA(Gln) + L-glutamine + ATP + H2O = L-glutaminyl-tRNA(Gln) + L-glutamate + ADP + phosphate + H(+). Functionally, allows the formation of correctly charged Gln-tRNA(Gln) through the transamidation of misacylated Glu-tRNA(Gln) in organisms which lack glutaminyl-tRNA synthetase. The reaction takes place in the presence of glutamine and ATP through an activated gamma-phospho-Glu-tRNA(Gln). This is Glutamyl-tRNA(Gln) amidotransferase subunit A from Nitrobacter hamburgensis (strain DSM 10229 / NCIMB 13809 / X14).